Consider the following 172-residue polypeptide: Protein-export protein SecB (172 aa).

It belongs to the SecB family. As to quaternary structure, homotetramer, a dimer of dimers. One homotetramer interacts with 1 SecA dimer.

It is found in the cytoplasm. In terms of biological role, one of the proteins required for the normal export of preproteins out of the cell cytoplasm. It is a molecular chaperone that binds to a subset of precursor proteins, maintaining them in a translocation-competent state. It also specifically binds to its receptor SecA. The sequence is that of Protein-export protein SecB from Xylella fastidiosa (strain Temecula1 / ATCC 700964).